A 145-amino-acid chain; its full sequence is 3-hydroxyacyl-[acyl-carrier-protein] dehydratase FabZ (145 aa).

H47 is an active-site residue.

The protein belongs to the thioester dehydratase family. FabZ subfamily.

It localises to the cytoplasm. It catalyses the reaction a (3R)-hydroxyacyl-[ACP] = a (2E)-enoyl-[ACP] + H2O. In terms of biological role, involved in unsaturated fatty acids biosynthesis. Catalyzes the dehydration of short chain beta-hydroxyacyl-ACPs and long chain saturated and unsaturated beta-hydroxyacyl-ACPs. The polypeptide is 3-hydroxyacyl-[acyl-carrier-protein] dehydratase FabZ (Methylobacillus flagellatus (strain ATCC 51484 / DSM 6875 / VKM B-1610 / KT)).